A 347-amino-acid polypeptide reads, in one-letter code: Extracellular metalloprotease (347 aa).

The signal sequence occupies residues 1 to 20; that stretch reads MKSRPICSVIPPYILHRIIA. The segment at 43 to 68 is disordered; that stretch reads SHHPRPEPHEKLPAGQANRSIHDAEQ. Position 162 (histidine 162) interacts with Zn(2+). The active site involves glutamate 163. Zn(2+) is bound by residues histidine 166 and glutamate 186. Histidine 264 (proton donor) is an active-site residue.

This sequence belongs to the peptidase M4 family. The cofactor is Ca(2+). Requires Zn(2+) as cofactor.

Its subcellular location is the secreted. This Pectobacterium carotovorum subsp. carotovorum (Erwinia carotovora subsp. carotovora) protein is Extracellular metalloprotease (prt1).